The following is a 255-amino-acid chain: Pyrroloquinoline-quinone synthase (255 aa).

It belongs to the PqqC family.

It catalyses the reaction 6-(2-amino-2-carboxyethyl)-7,8-dioxo-1,2,3,4,7,8-hexahydroquinoline-2,4-dicarboxylate + 3 O2 = pyrroloquinoline quinone + 2 H2O2 + 2 H2O + H(+). Its pathway is cofactor biosynthesis; pyrroloquinoline quinone biosynthesis. Functionally, ring cyclization and eight-electron oxidation of 3a-(2-amino-2-carboxyethyl)-4,5-dioxo-4,5,6,7,8,9-hexahydroquinoline-7,9-dicarboxylic-acid to PQQ. This chain is Pyrroloquinoline-quinone synthase, found in Cereibacter sphaeroides (strain KD131 / KCTC 12085) (Rhodobacter sphaeroides).